Reading from the N-terminus, the 287-residue chain is 33 kDa chaperonin (287 aa).

2 cysteine pairs are disulfide-bonded: C233–C235 and C266–C269.

The protein belongs to the HSP33 family. In terms of processing, under oxidizing conditions two disulfide bonds are formed involving the reactive cysteines. Under reducing conditions zinc is bound to the reactive cysteines and the protein is inactive.

It is found in the cytoplasm. Functionally, redox regulated molecular chaperone. Protects both thermally unfolding and oxidatively damaged proteins from irreversible aggregation. Plays an important role in the bacterial defense system toward oxidative stress. This is 33 kDa chaperonin from Thermodesulfovibrio yellowstonii (strain ATCC 51303 / DSM 11347 / YP87).